Consider the following 223-residue polypeptide: Pyridoxine/pyridoxamine 5'-phosphate oxidase (223 aa).

Substrate-binding positions include 8-11 (RVDY) and K65. Residues 60–65 (RTVLLK), 75–76 (YT), R81, K82, and Q104 contribute to the FMN site. Residues Y122, R126, and S130 each coordinate substrate. FMN is bound by residues 139–140 (QS) and W188. 194 to 196 (RLH) lines the substrate pocket. Residue R198 participates in FMN binding.

This sequence belongs to the pyridoxamine 5'-phosphate oxidase family. As to quaternary structure, homodimer. FMN is required as a cofactor.

It carries out the reaction pyridoxamine 5'-phosphate + O2 + H2O = pyridoxal 5'-phosphate + H2O2 + NH4(+). The catalysed reaction is pyridoxine 5'-phosphate + O2 = pyridoxal 5'-phosphate + H2O2. It functions in the pathway cofactor metabolism; pyridoxal 5'-phosphate salvage; pyridoxal 5'-phosphate from pyridoxamine 5'-phosphate: step 1/1. The protein operates within cofactor metabolism; pyridoxal 5'-phosphate salvage; pyridoxal 5'-phosphate from pyridoxine 5'-phosphate: step 1/1. Catalyzes the oxidation of either pyridoxine 5'-phosphate (PNP) or pyridoxamine 5'-phosphate (PMP) into pyridoxal 5'-phosphate (PLP). This Kineococcus radiotolerans (strain ATCC BAA-149 / DSM 14245 / SRS30216) protein is Pyridoxine/pyridoxamine 5'-phosphate oxidase.